The following is a 519-amino-acid chain: Ribonuclease Y 1 (519 aa).

A helical membrane pass occupies residues valine 3–leucine 23. The span at glutamine 92–alanine 120 shows a compositional bias: basic and acidic residues. The segment at glutamine 92–asparagine 124 is disordered. The region spanning threonine 209–leucine 272 is the KH domain. Residues alanine 335–threonine 428 form the HD domain.

It belongs to the RNase Y family.

Its subcellular location is the cell membrane. Functionally, endoribonuclease that initiates mRNA decay. The chain is Ribonuclease Y 1 from Levilactobacillus brevis (strain ATCC 367 / BCRC 12310 / CIP 105137 / JCM 1170 / LMG 11437 / NCIMB 947 / NCTC 947) (Lactobacillus brevis).